We begin with the raw amino-acid sequence, 91 residues long: UPF0250 protein Lcho_4239 (91 aa).

This sequence belongs to the UPF0250 family.

The chain is UPF0250 protein Lcho_4239 from Leptothrix cholodnii (strain ATCC 51168 / LMG 8142 / SP-6) (Leptothrix discophora (strain SP-6)).